The following is a 332-amino-acid chain: DNA-directed RNA polymerase subunit alpha (332 aa).

Residues 1-234 (MIEYVIPKKL…NHLQIITDSL (234 aa)) are alpha N-terminal domain (alpha-NTD). The interval 264–332 (AVYSKKIDEL…KFGLSLKKGG (69 aa)) is alpha C-terminal domain (alpha-CTD).

The protein belongs to the RNA polymerase alpha chain family. As to quaternary structure, homodimer. The RNAP catalytic core consists of 2 alpha, 1 beta, 1 beta' and 1 omega subunit. When a sigma factor is associated with the core the holoenzyme is formed, which can initiate transcription.

The enzyme catalyses RNA(n) + a ribonucleoside 5'-triphosphate = RNA(n+1) + diphosphate. DNA-dependent RNA polymerase catalyzes the transcription of DNA into RNA using the four ribonucleoside triphosphates as substrates. This chain is DNA-directed RNA polymerase subunit alpha, found in Pseudothermotoga lettingae (strain ATCC BAA-301 / DSM 14385 / NBRC 107922 / TMO) (Thermotoga lettingae).